The following is a 191-amino-acid chain: Ribosomal RNA small subunit methyltransferase G (191 aa).

S-adenosyl-L-methionine-binding positions include G62, F67, 111 to 112 (IE), and R124.

It belongs to the methyltransferase superfamily. RNA methyltransferase RsmG family.

Its subcellular location is the cytoplasm. The enzyme catalyses guanosine(527) in 16S rRNA + S-adenosyl-L-methionine = N(7)-methylguanosine(527) in 16S rRNA + S-adenosyl-L-homocysteine. Its function is as follows. Specifically methylates the N7 position of guanine in position 527 of 16S rRNA. The chain is Ribosomal RNA small subunit methyltransferase G from Rickettsia typhi (strain ATCC VR-144 / Wilmington).